A 206-amino-acid chain; its full sequence is MDLVIRTLDGNEAGRLKVSESIFGLVPREDILQRVVRWQLARHQQGTHHSQGRSDVSRTGAKMFKQKGTGRARHSSARAPQFRGGGKAHGPVVRSHAHDLPKKIRVLGLRLALSAKLKANDLIIVDELNVKEAKTKMLVSCFSKLGFKNALLVGGKEIDINFSRAASNIPNIDILPIQGINVYDILRRSKLVLSKAAVEALEERFK.

Residues 65–76 (KQKGTGRARHSS) are compositionally biased toward basic residues. The tract at residues 65–94 (KQKGTGRARHSSARAPQFRGGGKAHGPVVR) is disordered.

It belongs to the universal ribosomal protein uL4 family. Part of the 50S ribosomal subunit.

In terms of biological role, one of the primary rRNA binding proteins, this protein initially binds near the 5'-end of the 23S rRNA. It is important during the early stages of 50S assembly. It makes multiple contacts with different domains of the 23S rRNA in the assembled 50S subunit and ribosome. Forms part of the polypeptide exit tunnel. This Bartonella quintana (strain Toulouse) (Rochalimaea quintana) protein is Large ribosomal subunit protein uL4.